We begin with the raw amino-acid sequence, 76 residues long: UPF0291 protein Aflv_1503 (76 aa).

Positions 56–76 (DPNGNDVTPQKLKDSKKKRLH) are disordered.

This sequence belongs to the UPF0291 family.

It localises to the cytoplasm. This Anoxybacillus flavithermus (strain DSM 21510 / WK1) protein is UPF0291 protein Aflv_1503.